A 421-amino-acid polypeptide reads, in one-letter code: Zinc metalloproteinase-disintegrin-like lachestatin-2 (421 aa).

The Peptidase M12B domain maps to 10–206 (KYVKLVLVAD…DMPQCILEKP (197 aa)). 3 disulfides stabilise this stretch: Cys-121–Cys-201, Cys-161–Cys-185, and Cys-163–Cys-168. His-146 contacts Zn(2+). Glu-147 is a catalytic residue. His-150 and His-156 together coordinate Zn(2+). The Disintegrin domain maps to 214–299 (PPVCGNYFVE…AECTDRFQRN (86 aa)). Residues Val-216, Asn-219, Phe-221, Glu-223, Glu-226, and Asp-229 each contribute to the Ca(2+) site. 14 disulfides stabilise this stretch: Cys-217-Cys-246, Cys-228-Cys-241, Cys-230-Cys-236, Cys-240-Cys-263, Cys-254-Cys-260, Cys-259-Cys-285, Cys-272-Cys-292, Cys-279-Cys-310, Cys-303-Cys-315, Cys-322-Cys-372, Cys-337-Cys-383, Cys-350-Cys-360, Cys-367-Cys-409, and Cys-403-Cys-414. The D/ECD-tripeptide signature appears at 278–280 (ECD). Residues Asp-280, Met-281, Asp-283, Asp-294, and Arg-295 each coordinate Ca(2+). The N-linked (GlcNAc...) asparagine glycan is linked to Asn-312.

The protein belongs to the venom metalloproteinase (M12B) family. P-III subfamily. P-IIIc sub-subfamily. As to quaternary structure, homodimer; disulfide-linked. Requires Zn(2+) as cofactor. In terms of tissue distribution, expressed by the venom gland.

The protein resides in the secreted. Functionally, snake venom zinc metalloprotease that induces apoptosis in vascular endothelial cells (VEC), without degrading the extracellular matrix (it cannot cleave collagen) or inhibiting adhesion of VEC. Has also fibrinogenolytic and hemorrhagic activities. The polypeptide is Zinc metalloproteinase-disintegrin-like lachestatin-2 (Lachesis muta rhombeata (Bushmaster)).